The sequence spans 235 residues: Mediator of RNA polymerase II transcription subunit 29 (235 aa).

The segment covering 1–14 (MMNQMGMMMQQQGV) has biased composition (low complexity). A disordered region spans residues 1–54 (MMNQMGMMMQQQGVGVPGGPGGVGGVGMPGPGGVGVAPGMMQSPQMQQAQQQQV). Positions 15–36 (GVPGGPGGVGGVGMPGPGGVGV) are enriched in gly residues. Residues 37 to 54 (APGMMQSPQMQQAQQQQV) are compositionally biased toward low complexity.

The protein belongs to the Mediator complex subunit 29 family. Component of the Mediator complex.

The protein localises to the nucleus. Its function is as follows. Component of the Mediator complex, a coactivator involved in the regulated transcription of nearly all RNA polymerase II-dependent genes. Mediator functions as a bridge to convey information from gene-specific regulatory proteins to the basal RNA polymerase II transcription machinery. Mediator is recruited to promoters by direct interactions with regulatory proteins and serves as a scaffold for the assembly of a functional preinitiation complex with RNA polymerase II and the general transcription factors. This Anopheles gambiae (African malaria mosquito) protein is Mediator of RNA polymerase II transcription subunit 29 (ix).